The chain runs to 995 residues: Endo-beta-N-acetylglucosaminidase EndoS (995 aa).

The first 36 residues, 1–36, serve as a signal peptide directing secretion; sequence MDKHLLVKRTLGCVCAATLMGAALATHHDSLNTVKA. The region spanning 112 to 432 is the GH18 domain; sequence SLYGGYFRTW…KDATDNIFHS (321 aa). The a glycoprotein site is built by His151, Trp153, and Arg186. Glu235 (proton donor) is an active-site residue. A glycoprotein contacts are provided by Asp237, Gln303, Tyr305, Glu349, Glu350, Asn356, and Tyr402. 4 LRR repeats span residues 437 to 460, 478 to 503, 562 to 585, and 586 to 609; these read SKALKTVMLKDKSYDLIDEKDFPD, LERFNGTLRLDNPAIQSLEGLNKFKK, LTGLKELDLSGFDRETLAGLDAAT, and LTSLEKVDISGNKLDLAPGTENRQ. The interval 765-923 is carbohydrate-binding module (CBM); that stretch reads MVNLAEGATV…VPELQILGYP (159 aa). Lys786, Asp789, Gln791, Pro915, and Glu916 together coordinate Ca(2+). A three-helix bundle (3H) region spans residues 924–995; it reads LPNADTIMKT…CIEKRQLLKK (72 aa).

The protein belongs to the glycosyl hydrolase 18 family. Cleaved by SpeB protease; leading to loss of endoglucosidase activity. EndoS is produced and secreted prior to SpeB, suggesting that it is degraded after acting as a host immune evasion factor.

Its subcellular location is the secreted. It is found in the host extracellular space. It catalyses the reaction an N(4)-(oligosaccharide-(1-&gt;3)-[oligosaccharide-(1-&gt;6)]-beta-D-Man-(1-&gt;4)-beta-D-GlcNAc-(1-&gt;4)-alpha-D-GlcNAc)-L-asparaginyl-[protein] + H2O = an oligosaccharide-(1-&gt;3)-[oligosaccharide-(1-&gt;6)]-beta-D-Man-(1-&gt;4)-D-GlcNAc + N(4)-(N-acetyl-beta-D-glucosaminyl)-L-asparaginyl-[protein]. Its function is as follows. Endoglucosidase that acts as a host immune evasion factor by mediating hydrolysis of the N-linked glycan from the Fc region of host immunoglobulin-gamma (IgG) during infection. Specifically catalyzes the hydrolysis of the beta-1,4 linkage between the first two N-acetylglucosamine residues of the complex-type N-linked glycan located on 'Asn-297' of the Fc region of IgG antibodies (IGHG1, IGHG2, IGHG3 or IGHG4), thereby preventing interaction between IgGs and Fc receptors and ability to activate the complement pathway. Shows a specificity for biantennary complex type N-glycans; does neither cleave larger complex type glycans nor oligomannose and nor hybrid-type glycans. Specifically acts on IgGs; does not act on immunoglobulin alpha, beta, delta or mu. The protein is Endo-beta-N-acetylglucosaminidase EndoS of Streptococcus pyogenes serotype M1.